Reading from the N-terminus, the 237-residue chain is Eukaryotic translation initiation factor 3 subunit J (237 aa).

Residues 20–64 are disordered; sequence ANNINKWEGEDDDEDVKESWEDEEEKKDEEKPTKTEAPAKTKPNK. The span at 28-46 shows a compositional bias: acidic residues; the sequence is GEDDDEDVKESWEDEEEKK. Residues 47-58 show a composition bias toward basic and acidic residues; that stretch reads DEEKPTKTEAPA. The stretch at 63 to 115 forms a coiled coil; that stretch reads NKVLKAKLLEQECLEKEEEAKRLANMSTEEKLAEKLRLQKIQEESDLKSALET.

Belongs to the eIF-3 subunit J family. In terms of assembly, component of the eukaryotic translation initiation factor 3 (eIF-3) complex. The eIF-3 complex interacts with pix.

It is found in the cytoplasm. Functionally, component of the eukaryotic translation initiation factor 3 (eIF-3) complex, which is involved in protein synthesis of a specialized repertoire of mRNAs and, together with other initiation factors, stimulates binding of mRNA and methionyl-tRNAi to the 40S ribosome. The eIF-3 complex specifically targets and initiates translation of a subset of mRNAs involved in cell proliferation. This chain is Eukaryotic translation initiation factor 3 subunit J, found in Drosophila grimshawi (Hawaiian fruit fly).